A 224-amino-acid chain; its full sequence is Ethylene-inducing xylanase 5 (224 aa).

Residues 1–16 form the signal peptide; it reads MLKSLVVLLLTSRVIA. The region spanning 32-218 is the GH11 domain; the sequence is QATPNSQGTH…SSGFAEMTVA (187 aa). An N-linked (GlcNAc...) asparagine glycan is attached at Asn-88. Catalysis depends on Glu-117, which acts as the Nucleophile. Glu-205 functions as the Proton donor in the catalytic mechanism.

This sequence belongs to the glycosyl hydrolase 11 (cellulase G) family.

It catalyses the reaction Endohydrolysis of (1-&gt;4)-beta-D-xylosidic linkages in xylans.. Its pathway is glycan degradation; xylan degradation. In terms of biological role, endo-1,4-beta-xylanase involved in the hydrolysis of xylan, a major structural heterogeneous polysaccharide found in plant biomass representing the second most abundant polysaccharide in the biosphere, after cellulose. May act as an elicitor of plant defense responses in certain plants but does not exhibit any cell death when transiently expressed in N.benthamiana. This chain is Ethylene-inducing xylanase 5, found in Verticillium dahliae (strain VdLs.17 / ATCC MYA-4575 / FGSC 10137) (Verticillium wilt).